Consider the following 445-residue polypeptide: Alpha-1,3-mannosyl-glycoprotein 2-beta-N-acetylglucosaminyltransferase (445 aa).

At 1–6 the chain is on the cytoplasmic side; that stretch reads MLKKQS. A helical; Signal-anchor for type II membrane protein membrane pass occupies residues 7 to 29; the sequence is AGLVLWGAILFVAWNALLLLFFW. Over 30-445 the chain is Lumenal; the sequence is TRPAPGRPPS…TWEGYDPSWN (416 aa). Cysteines 113 and 143 form a disulfide. Substrate contacts are provided by Arg115, Asp142, His188, and Asp210. Asp211 lines the Mn(2+) pocket. Cysteines 237 and 303 form a disulfide. The Proton acceptor role is filled by Asp289. Substrate is bound at residue Ser320.

The protein belongs to the glycosyltransferase 13 family. Interacts with MGAT4D. Interacts with BRI3 (isoforms 1 and 2); the interaction with isoform 2 is weaker than with isoform 1. Mn(2+) is required as a cofactor.

The protein resides in the golgi apparatus membrane. It is found in the cytoplasm. Its subcellular location is the perinuclear region. The enzyme catalyses N(4)-(alpha-D-Man-(1-&gt;3)-[alpha-D-Man-(1-&gt;3)-[alpha-D-Man-(1-&gt;6)]-alpha-D-Man-(1-&gt;6)]-beta-D-Man-(1-&gt;4)-beta-D-GlcNAc-(1-&gt;4)-beta-D-GlcNAc)-L-asparaginyl-[protein] (N-glucan mannose isomer 5A1,2) + UDP-N-acetyl-alpha-D-glucosamine = N(4)-{beta-D-GlcNAc-(1-&gt;2)-alpha-D-Man-(1-&gt;3)-[alpha-D-Man-(1-&gt;3)-[alpha-D-Man-(1-&gt;6)]-alpha-D-Man-(1-&gt;6)]-beta-D-Man-(1-&gt;4)-beta-D-GlcNAc-(1-&gt;4)-beta-D-GlcNAc}-L-asparaginyl-[protein] + UDP + H(+). It participates in protein modification; protein glycosylation. In terms of biological role, initiates complex N-linked carbohydrate formation. Essential for the conversion of high-mannose to hybrid and complex N-glycans. This Homo sapiens (Human) protein is Alpha-1,3-mannosyl-glycoprotein 2-beta-N-acetylglucosaminyltransferase (MGAT1).